Reading from the N-terminus, the 211-residue chain is High mobility group protein B1-like 1 (211 aa).

Residues Lys-3, Lys-7, Lys-8, Lys-12, Lys-28, Lys-29, and Lys-30 each carry the N6-acetyllysine modification. Positions 9–79 (PRGKMSSYAF…HYERQMKTYI (71 aa)) form a DNA-binding region, HMG box 1. The tract at residues 71-96 (YERQMKTYIPPKGETKKKFKDPNAPK) is disordered. Basic and acidic residues predominate over residues 83–94 (GETKKKFKDPNA). Positions 95-163 (PKRPPSAFFL…KYEKDIAAYQ (69 aa)) form a DNA-binding region, HMG box 2. Lys-127, Lys-128, Lys-172, Lys-173, Lys-177, Lys-180, Lys-182, Lys-183, Lys-184, and Lys-185 each carry N6-acetyllysine. Residues 161–211 (AYQAKGKPEAAKKGVVKAEKSKKKKEEEEDEEDEEDEEEEDEEDEEDDDDE) are disordered. Positions 166–179 (GKPEAAKKGVVKAE) are enriched in basic and acidic residues. Positions 187 to 211 (EEEDEEDEEDEEEEDEEDEEDDDDE) are enriched in acidic residues.

This sequence belongs to the HMGB family.

It localises to the nucleus. It is found in the chromosome. Binds preferentially single-stranded DNA and unwinds double-stranded DNA. The polypeptide is High mobility group protein B1-like 1 (HMGB1P1) (Homo sapiens (Human)).